The sequence spans 321 residues: Oxidoreductase P35 (321 aa).

It belongs to the Gfo/Idh/MocA family.

Its subcellular location is the cell surface. In terms of biological role, oxidoreductase that may be involved in ulvan degradation. Ulvan is the main polysaccharide component of the Ulvales (green seaweed) cell wall. It is composed of disaccharide building blocks comprising 3-sulfated rhamnose (Rha3S) linked to D-glucuronic acid (GlcA), L-iduronic acid (IduA), or D-xylose (Xyl). In Formosa agariphila (strain DSM 15362 / KCTC 12365 / LMG 23005 / KMM 3901 / M-2Alg 35-1), this protein is Oxidoreductase P35.